A 158-amino-acid polypeptide reads, in one-letter code: NADPH-dependent 7-cyano-7-deazaguanine reductase (158 aa).

Residues 1–37 (MAKRSIKSETSPELQLGRPVTAPDSPETARLDRVPNP) form a disordered region. A compositionally biased stretch (basic and acidic residues) spans 27 to 37 (ETARLDRVPNP). C56 serves as the catalytic Thioimide intermediate. D63 acts as the Proton donor in catalysis. Residues 78 to 80 (VES) and 97 to 98 (HE) each bind substrate.

The protein belongs to the GTP cyclohydrolase I family. QueF type 1 subfamily.

Its subcellular location is the cytoplasm. The catalysed reaction is 7-aminomethyl-7-carbaguanine + 2 NADP(+) = 7-cyano-7-deazaguanine + 2 NADPH + 3 H(+). It participates in tRNA modification; tRNA-queuosine biosynthesis. Catalyzes the NADPH-dependent reduction of 7-cyano-7-deazaguanine (preQ0) to 7-aminomethyl-7-deazaguanine (preQ1). This chain is NADPH-dependent 7-cyano-7-deazaguanine reductase, found in Bradyrhizobium sp. (strain BTAi1 / ATCC BAA-1182).